A 75-amino-acid chain; its full sequence is UPF0352 protein ASA_2693 (75 aa).

The protein belongs to the UPF0352 family.

This Aeromonas salmonicida (strain A449) protein is UPF0352 protein ASA_2693.